Consider the following 947-residue polypeptide: ATP-dependent RNA helicase DDX42 (947 aa).

The span at 1–18 shows a compositional bias: gly residues; it reads MNWNKGGSGNKRGFGFGG. Disordered regions lie at residues 1–54, 68–114, and 176–200; these read MNWN…NQLP, EENS…PLEA, and NLEY…LPPI. Polar residues predominate over residues 34 to 54; it reads VSHSAFQSASSKYGSTSNQLP. The span at 68–81 shows a compositional bias: acidic residues; that stretch reads EENSYFDDEEEDSS. The stretch at 112 to 152 forms a coiled coil; sequence LEAFMAEVEDQAAKDMRKLEERDKEKANARGIRDDIEEEDD. The Q motif signature appears at 250-278; that stretch reads SSFAHFGFDEQLLHQIRKSEYTQPTPIQC. Residues 281 to 456 form the Helicase ATP-binding domain; the sequence is IPVALSGRDM…RDILVDPIRV (176 aa). Position 294 to 301 (294 to 301) interacts with ATP; sequence AKTGSGKT. A DEAD box motif is present at residues 404 to 407; that stretch reads DEAD. Residues 484-629 enclose the Helicase C-terminal domain; that stretch reads WLTRRLVEFT…YVSKELLDLA (146 aa). Disordered regions lie at residues 731 to 754 and 797 to 947; these read SAGS…EAAP and GASA…RWDS. Basic and acidic residues predominate over residues 805–929; that stretch reads GGRERHSDSK…RKEGTREAKT (125 aa). Over residues 938–947 the composition is skewed to basic residues; it reads PKRKKSRWDS.

It belongs to the DEAD box helicase family. DDX42 subfamily. Transient component of the SF3B subcomplex of the 17S U2 SnRNP complex.

The protein resides in the cytoplasm. It localises to the nucleus. It catalyses the reaction ATP + H2O = ADP + phosphate + H(+). Functionally, ATP-dependent RNA helicase that binds to partially double-stranded RNAs (dsRNAs) in order to unwind RNA secondary structures. Unwinding is promoted in the presence of single-strand binding proteins. Also mediates RNA duplex formation thereby displacing the single-strand RNA binding protein. ATP and ADP modulate its activity: ATP binding and hydrolysis by DDX42 triggers RNA strand separation, whereas the ADP-bound form of the protein triggers annealing of complementary RNA strands. Required for assembly of the 17S U2 SnRNP complex of the spliceosome, a large ribonucleoprotein complex that removes introns from transcribed pre-mRNAs: DDX42 associates transiently with the SF3B subcomplex of the 17S U2 SnRNP complex and is released after fulfilling its role in the assembly of 17S U2 SnRNP. This Xenopus laevis (African clawed frog) protein is ATP-dependent RNA helicase DDX42 (ddx42).